The following is a 993-amino-acid chain: MVESKIIKLLEQVQSADPNSRIQAELGLRDLEKYHDFAAKLTDIASSGASVPLRQGSLIYLQRYIVHHWSPLFEQFQDGPIPDENVKKHVRETLLHLLVSLDNFTLIKAVAYAVSLIANVDYPDEWPEVVPAVLHLLQSTNENSINASLDVLDELVDESLVEEQFFIIAPQLASILYQFIFSAPPNDSMRMLQARGIKLFRSCLELIEIYKETKAEHVRVFLEQILPPWMDMFSHKFEVSLVDDRQVILPDSCGYFCIMGEIAMTLTKLRELFPSKLTPYVVTFVELVWNIIEKLLDPYIREVVFSDGLDDSAFGDKYPIRYLVELLLFVSVALQSKFVQNLFVSNTVPVPPLPPCIPLLVQYTQLPKHQIEVYESDVSEYIANEFSMDFASDTVRGAAISVLSAFEEHTTLPIQQSLREMSATYILNNEINWIYQEALLYACCSVDAASDDTYDDYLDPIYEAIKVRIDYSDAPILLLSRFFLFIGYFSESTVVASQFFQIIMNNLVNALQVDTVQYAAMKAIERFCSVGKVKPILSLQPMILEVLSQYASKSSDEALVLLVEAISSAVKLDCAKAAELGNSVIPLLFNLVATNASDPYICGIIEDTFEDIIHAANNYESMCEITLPELLQVLNQEDPIMVNIGATLLSCLIRAGPSPLPNGFVGYVLPPVYKITQIHSGDTELLQLSQEILKGLLEKDTPQLLETEISGSSGFQYILFILHQLLDKESDDSACFLVGPILLELADHASQMVDLQSILLSCIKRLAIAEQPRFIQSIIYVFAKLIVKDSLGMMHFLTSSLLNEQGLTAFEVLMTVWCDNFVYFSNFKNISIICIAMTKIYSFDSPLLDSVQVKGELISHSNRIITRSQSKLHPEEYSYVSVGEKILRLLSEEFVSLSKDAIVEEVSDDGADDWDDGPISAETFGLSANDVNELSKDEFSGVDNSEDEDNTDLQFYLLEFFKEAMKSNLHNINEVVFRLPQEEQDALVQIKEK.

In terms of domain architecture, Importin N-terminal spans 24–100; sequence AELGLRDLEK…RETLLHLLVS (77 aa).

It is found in the nucleus. Functionally, required for nuclear protein import and mediates docking of import substrate to distinct nucleoporins. Serves a receptor for nuclear localization signals. Mediates the nuclear import of TATA-binding protein (TBP) and of histones H2A and H2B. The polypeptide is Importin subunit beta-5 (kap114) (Schizosaccharomyces pombe (strain 972 / ATCC 24843) (Fission yeast)).